We begin with the raw amino-acid sequence, 165 residues long: Large ribosomal subunit protein uL10 (165 aa).

The protein belongs to the universal ribosomal protein uL10 family. Part of the ribosomal stalk of the 50S ribosomal subunit. The N-terminus interacts with L11 and the large rRNA to form the base of the stalk. The C-terminus forms an elongated spine to which L12 dimers bind in a sequential fashion forming a multimeric L10(L12)X complex.

Forms part of the ribosomal stalk, playing a central role in the interaction of the ribosome with GTP-bound translation factors. In Salmonella agona (strain SL483), this protein is Large ribosomal subunit protein uL10.